Reading from the N-terminus, the 231-residue chain is tRNA (guanine-N(1)-)-methyltransferase (231 aa).

S-adenosyl-L-methionine is bound by residues G114 and 134-139 (IGDYVL).

The protein belongs to the RNA methyltransferase TrmD family. As to quaternary structure, homodimer.

Its subcellular location is the cytoplasm. It catalyses the reaction guanosine(37) in tRNA + S-adenosyl-L-methionine = N(1)-methylguanosine(37) in tRNA + S-adenosyl-L-homocysteine + H(+). Functionally, specifically methylates guanosine-37 in various tRNAs. This Clostridioides difficile (strain 630) (Peptoclostridium difficile) protein is tRNA (guanine-N(1)-)-methyltransferase.